Consider the following 246-residue polypeptide: E3 ubiquitin-protein ligase MARCHF2 (246 aa).

The RING-CH-type zinc-finger motif lies at 56-116; the sequence is GTQSDGPICR…ELCHTEFAVE (61 aa). Positions 64, 67, 80, 82, 90, 93, 106, and 109 each coordinate Zn(2+). 2 consecutive transmembrane segments (helical) span residues 138 to 158 and 175 to 195; these read LFCD…SGWL and AVGL…WTLV.

Its subcellular location is the endoplasmic reticulum membrane. The protein resides in the lysosome membrane. It localises to the endosome membrane. It carries out the reaction S-ubiquitinyl-[E2 ubiquitin-conjugating enzyme]-L-cysteine + [acceptor protein]-L-lysine = [E2 ubiquitin-conjugating enzyme]-L-cysteine + N(6)-ubiquitinyl-[acceptor protein]-L-lysine.. Its pathway is protein modification; protein ubiquitination. Functionally, E3 ubiquitin-protein ligase which may be involved in endosomal trafficking. E3 ubiquitin ligases accept ubiquitin from an E2 ubiquitin-conjugating enzyme in the form of a thioester and then directly transfer the ubiquitin to targeted substrates. The sequence is that of E3 ubiquitin-protein ligase MARCHF2 (marchf2) from Xenopus tropicalis (Western clawed frog).